Here is a 484-residue protein sequence, read N- to C-terminus: NADH-quinone oxidoreductase subunit N (484 aa).

A run of 14 helical transmembrane segments spans residues 11 to 31 (SLWI…VLLI), 42 to 62 (VTYY…FNLI), 79 to 98 (MASV…MVYS), 113 to 133 (FVLV…YSLL), 134 to 154 (TLYL…AIAR), 167 to 187 (FVLG…IYGI), 211 to 231 (LIIN…LGAV), 248 to 268 (VTLF…VRIL), 279 to 299 (WSDL…VVAL), 313 to 333 (ISHV…GYGA), 335 to 355 (AFYM…IILL), 378 to 398 (FALM…LVGF), 408 to 428 (VVSA…VISA), and 457 to 477 (LVLS…DFWM).

The protein belongs to the complex I subunit 2 family. NDH-1 is composed of 14 different subunits. Subunits NuoA, H, J, K, L, M, N constitute the membrane sector of the complex.

The protein localises to the cell inner membrane. It carries out the reaction a quinone + NADH + 5 H(+)(in) = a quinol + NAD(+) + 4 H(+)(out). In terms of biological role, NDH-1 shuttles electrons from NADH, via FMN and iron-sulfur (Fe-S) centers, to quinones in the respiratory chain. The immediate electron acceptor for the enzyme in this species is believed to be ubiquinone. Couples the redox reaction to proton translocation (for every two electrons transferred, four hydrogen ions are translocated across the cytoplasmic membrane), and thus conserves the redox energy in a proton gradient. This is NADH-quinone oxidoreductase subunit N from Ruthia magnifica subsp. Calyptogena magnifica.